A 256-amino-acid chain; its full sequence is Tryptophan synthase alpha chain (256 aa).

Residues Glu-44 and Asp-55 each act as proton acceptor in the active site.

It belongs to the TrpA family. In terms of assembly, tetramer of two alpha and two beta chains.

It catalyses the reaction (1S,2R)-1-C-(indol-3-yl)glycerol 3-phosphate + L-serine = D-glyceraldehyde 3-phosphate + L-tryptophan + H2O. The protein operates within amino-acid biosynthesis; L-tryptophan biosynthesis; L-tryptophan from chorismate: step 5/5. The alpha subunit is responsible for the aldol cleavage of indoleglycerol phosphate to indole and glyceraldehyde 3-phosphate. In Coxiella burnetii (strain CbuK_Q154) (Coxiella burnetii (strain Q154)), this protein is Tryptophan synthase alpha chain.